A 404-amino-acid chain; its full sequence is Cysteine desulfurase IscS (404 aa).

Residues 75-76 (AT), Asn155, Gln183, and 203-205 (SGH) contribute to the pyridoxal 5'-phosphate site. Lys206 carries the post-translational modification N6-(pyridoxal phosphate)lysine. Thr243 contributes to the pyridoxal 5'-phosphate binding site. Catalysis depends on Cys328, which acts as the Cysteine persulfide intermediate. Cys328 provides a ligand contact to [2Fe-2S] cluster.

This sequence belongs to the class-V pyridoxal-phosphate-dependent aminotransferase family. NifS/IscS subfamily. Homodimer. Forms a heterotetramer with IscU, interacts with other sulfur acceptors. It depends on pyridoxal 5'-phosphate as a cofactor.

It is found in the cytoplasm. The enzyme catalyses (sulfur carrier)-H + L-cysteine = (sulfur carrier)-SH + L-alanine. The protein operates within cofactor biosynthesis; iron-sulfur cluster biosynthesis. Functionally, master enzyme that delivers sulfur to a number of partners involved in Fe-S cluster assembly, tRNA modification or cofactor biosynthesis. Catalyzes the removal of elemental sulfur atoms from cysteine to produce alanine. Functions as a sulfur delivery protein for Fe-S cluster synthesis onto IscU, an Fe-S scaffold assembly protein, as well as other S acceptor proteins. The polypeptide is Cysteine desulfurase IscS (Shewanella frigidimarina (strain NCIMB 400)).